We begin with the raw amino-acid sequence, 84 residues long: Hepcidin (84 aa).

Positions 1 to 24 (MALSSQIWAACLLLLLLLASLTSG) are cleaved as a signal peptide. Positions 25-54 (SVFPQQTGQLAELQPQDRAGARAGWTPMLQ) are excised as a propeptide. 3 cysteine pairs are disulfide-bonded: Cys69–Cys72, Cys70–Cys78, and Cys73–Cys81.

The protein belongs to the hepcidin family. As to quaternary structure, interacts with SLC40A1; this interaction promotes SLC40A1 rapid ubiquitination.

The protein resides in the secreted. In terms of biological role, liver-produced hormone that constitutes the main circulating regulator of iron absorption and distribution across tissues. Acts by promoting endocytosis and degradation of ferroportin/SLC40A1, leading to the retention of iron in iron-exporting cells and decreased flow of iron into plasma. Controls the major flows of iron into plasma: absorption of dietary iron in the intestine, recycling of iron by macrophages, which phagocytose old erythrocytes and other cells, and mobilization of stored iron from hepatocytes. Its function is as follows. Has strong antimicrobial activity against E.coli ML35P N.cinerea and weaker against S.epidermidis, S.aureus and group b streptococcus bacteria. Active against the fungus C.albicans. No activity against P.aeruginosa. The chain is Hepcidin (HAMP) from Pongo abelii (Sumatran orangutan).